Here is a 631-residue protein sequence, read N- to C-terminus: RING finger protein 112 (631 aa).

An RING-type zinc finger spans residues 57-98; the sequence is CSICLERLREPISLDCGHDFCIRCFSTHRIPGCELPCCPECR. An interaction with ZBTB16 region spans residues 131 to 631; that stretch reads AVRAERLLLV…GDREPLLQEE (501 aa). The GB1/RHD3-type G domain maps to 166–397; that stretch reads DTPVCLLAVL…YISDVLSTAP (232 aa). 317 to 318 contacts GTP; that stretch reads RD. The next 2 helical transmembrane spans lie at 547 to 567 and 580 to 600; these read LAAVGGAVGAGLMGLAGGVVG and GMVAAGAAVGATGAAVVGGGV.

The protein belongs to the TRAFAC class dynamin-like GTPase superfamily. GB1/RHD3 GTPase family. GB1 subfamily. In terms of assembly, self-associates. Interacts with SP1 in an oxidative stress-regulated manner. Interacts with SIGMAR1 in an oxidative stress-regulated manner. Interacts with ZBTB16 (via C2H2-type zinc finger domains 1 and 2). In terms of processing, auto-ubiquitinated. As to expression, predominantly expressed in brain.

It localises to the membrane. It is found in the cytoplasm. The protein resides in the nucleus. Its subcellular location is the nuclear body. The protein localises to the nucleoplasm. It localises to the endosome. It is found in the cytoplasmic vesicle. The protein resides in the secretory vesicle. Its subcellular location is the synaptic vesicle. The protein localises to the postsynaptic density. It localises to the perikaryon. It is found in the cell projection. The protein resides in the neuron projection. It catalyses the reaction S-ubiquitinyl-[E2 ubiquitin-conjugating enzyme]-L-cysteine + [acceptor protein]-L-lysine = [E2 ubiquitin-conjugating enzyme]-L-cysteine + N(6)-ubiquitinyl-[acceptor protein]-L-lysine.. The protein operates within protein modification; protein ubiquitination. E3 ubiquitin-protein ligase that plays an important role in neuronal differentiation, including neurogenesis and gliogenesis, during brain development. During embryonic development initiates neuronal differentiation by inducing cell cycle arrest at the G0/G1 phase through up-regulation of cell-cycle regulatory proteins. Plays a role not only in the fetal period during the development of the nervous system, but also in the adult brain, where it is involved in the maintenance of neural functions and protection of the nervous tissue cells from oxidative stress-induced damage. Exhibits GTPase and E3 ubiquitin-protein ligase activities. Regulates dendritic spine density and synaptic neurotransmission; its ability to hydrolyze GTP is involved in the maintenance of dendritic spine density. The chain is RING finger protein 112 (Rnf112) from Rattus norvegicus (Rat).